The chain runs to 650 residues: DNA ligase (650 aa).

NAD(+) contacts are provided by residues 30–34 and 79–80; these read DEQYD and SL. Lys110 (N6-AMP-lysine intermediate) is an active-site residue. NAD(+)-binding residues include Arg131, Glu165, and Lys304. Zn(2+)-binding residues include Cys398, Cys401, Cys414, and Cys419. One can recognise a BRCT domain in the interval 573-650; it reads DNNNVFFNKT…EEEFLAQINK (78 aa).

Belongs to the NAD-dependent DNA ligase family. LigA subfamily. It depends on Mg(2+) as a cofactor. Mn(2+) is required as a cofactor.

The enzyme catalyses NAD(+) + (deoxyribonucleotide)n-3'-hydroxyl + 5'-phospho-(deoxyribonucleotide)m = (deoxyribonucleotide)n+m + AMP + beta-nicotinamide D-nucleotide.. Its function is as follows. DNA ligase that catalyzes the formation of phosphodiester linkages between 5'-phosphoryl and 3'-hydroxyl groups in double-stranded DNA using NAD as a coenzyme and as the energy source for the reaction. It is essential for DNA replication and repair of damaged DNA. This Helicobacter hepaticus (strain ATCC 51449 / 3B1) protein is DNA ligase.